We begin with the raw amino-acid sequence, 326 residues long: Probable cell division protein WhiA (326 aa).

Positions 275–308 (SLEELGQLAEPPMTKDAVAGRIRRLLAMADKRAR) form a DNA-binding region, H-T-H motif.

It belongs to the WhiA family.

In terms of biological role, involved in cell division and chromosome segregation. The polypeptide is Probable cell division protein WhiA (Saccharopolyspora erythraea (strain ATCC 11635 / DSM 40517 / JCM 4748 / NBRC 13426 / NCIMB 8594 / NRRL 2338)).